The sequence spans 548 residues: Probable sucrose-6-phosphate hydrolase (548 aa).

Substrate is bound by residues 105–108 (LLND), Q124, 167–168 (FS), 228–229 (RD), and E283. The active site involves D108.

Belongs to the glycosyl hydrolase 32 family.

The protein resides in the cytoplasm. It catalyses the reaction Hydrolysis of terminal non-reducing beta-D-fructofuranoside residues in beta-D-fructofuranosides.. The protein operates within glycan biosynthesis; sucrose metabolism. Its function is as follows. Enables the bacterium to metabolize sucrose as a sole carbon source. This Vibrio cholerae serotype O1 (strain ATCC 39315 / El Tor Inaba N16961) protein is Probable sucrose-6-phosphate hydrolase.